The chain runs to 331 residues: Ferrochelatase (331 aa).

Residues histidine 187 and glutamate 286 each coordinate Fe cation.

Belongs to the ferrochelatase family.

It is found in the cytoplasm. It carries out the reaction heme b + 2 H(+) = protoporphyrin IX + Fe(2+). Its pathway is porphyrin-containing compound metabolism; protoheme biosynthesis; protoheme from protoporphyrin-IX: step 1/1. Functionally, catalyzes the ferrous insertion into protoporphyrin IX. The polypeptide is Ferrochelatase (Legionella pneumophila subsp. pneumophila (strain Philadelphia 1 / ATCC 33152 / DSM 7513)).